Consider the following 151-residue polypeptide: uncharacterized protein (151 aa).

An N-terminal signal peptide occupies residues 1–32; that stretch reads MEEAEKAKRRSIELLNETRNCAYSSFVALAEA. Residues 45–67 form a helical membrane-spanning segment; sequence AIGFAGGISGSGHICGALWGSIA.

Its subcellular location is the membrane. This is an uncharacterized protein from Archaeoglobus fulgidus (strain ATCC 49558 / DSM 4304 / JCM 9628 / NBRC 100126 / VC-16).